We begin with the raw amino-acid sequence, 116 residues long: Large ribosomal subunit protein bL19 (116 aa).

This sequence belongs to the bacterial ribosomal protein bL19 family.

This protein is located at the 30S-50S ribosomal subunit interface and may play a role in the structure and function of the aminoacyl-tRNA binding site. This chain is Large ribosomal subunit protein bL19, found in Staphylococcus aureus (strain USA300).